A 176-amino-acid chain; its full sequence is MGYPKEGETIQIHSYKHNGLLHRIWNETTILKSTELCIIGANDRTMVTESDGRTWVTREPAICYFHARQWFNVIGMLRDDGVHYYCNISSPFAYDGEAIKYIDYDLDVKVFPDMTYNILDEDEYDDHRKSMNYPKEIDSILKEYLNTLLHWIHQRKGPFAPEFVDMWYERYLRYTK.

R23 acts as the Proton donor in catalysis. N87, D103, D105, D107, D120, and E123 together coordinate Mg(2+).

Belongs to the Ntdp family. Mg(2+) serves as cofactor.

It carries out the reaction a ribonucleoside 5'-triphosphate + H2O = a ribonucleoside 5'-diphosphate + phosphate + H(+). The catalysed reaction is a ribonucleoside 5'-diphosphate + H2O = a ribonucleoside 5'-phosphate + phosphate + H(+). Has nucleoside phosphatase activity towards nucleoside triphosphates and nucleoside diphosphates. The protein is Nucleoside triphosphate/diphosphate phosphatase of Bacillus velezensis (strain DSM 23117 / BGSC 10A6 / LMG 26770 / FZB42) (Bacillus amyloliquefaciens subsp. plantarum).